The chain runs to 134 residues: Thionin-2.1 (134 aa).

The signal sequence occupies residues 1-24 (MKGRILILSLLIMSLVMAQVQVEA). 3 disulfides stabilise this stretch: Cys-27/Cys-61, Cys-28/Cys-55, and Cys-40/Cys-49. A propeptide spans 68–134 (AILENSADAT…VVPPGPPKLL (67 aa)) (acidic domain).

This sequence belongs to the plant thionin (TC 1.C.44) family. In terms of tissue distribution, detected in rosette leaves and at a very high level in flowers and in siliques.

Its subcellular location is the secreted. Its function is as follows. Seems to function as a defense factor. Thionins are small plant proteins which are toxic to animal cells. They seem to exert their toxic effect at the level of the cell membrane. Their precise function is not known. The protein is Thionin-2.1 (THI2.1) of Arabidopsis thaliana (Mouse-ear cress).